The sequence spans 299 residues: Cytidine deaminase (299 aa).

CMP/dCMP-type deaminase domains lie at 56–176 (SKIE…FGPK) and 194–299 (LQGD…YIAV). 97–99 (NQE) serves as a coordination point for substrate. Residue H110 participates in Zn(2+) binding. The Proton donor role is filled by E112. Zn(2+)-binding residues include C137 and C140.

This sequence belongs to the cytidine and deoxycytidylate deaminase family. Homodimer. It depends on Zn(2+) as a cofactor.

The catalysed reaction is cytidine + H2O + H(+) = uridine + NH4(+). It catalyses the reaction 2'-deoxycytidine + H2O + H(+) = 2'-deoxyuridine + NH4(+). Functionally, this enzyme scavenges exogenous and endogenous cytidine and 2'-deoxycytidine for UMP synthesis. In Haemophilus ducreyi (strain 35000HP / ATCC 700724), this protein is Cytidine deaminase.